The chain runs to 272 residues: Phosphate import ATP-binding protein PstB (272 aa).

The 242-residue stretch at 26 to 267 (VAARNLNFYY…PADRRTQDYI (242 aa)) folds into the ABC transporter domain. 58 to 65 (GPSGCGKS) serves as a coordination point for ATP.

It belongs to the ABC transporter superfamily. Phosphate importer (TC 3.A.1.7) family. The complex is composed of two ATP-binding proteins (PstB), two transmembrane proteins (PstC and PstA) and a solute-binding protein (PstS).

It is found in the cell inner membrane. It carries out the reaction phosphate(out) + ATP + H2O = ADP + 2 phosphate(in) + H(+). Part of the ABC transporter complex PstSACB involved in phosphate import. Responsible for energy coupling to the transport system. This is Phosphate import ATP-binding protein PstB from Nitrobacter hamburgensis (strain DSM 10229 / NCIMB 13809 / X14).